The chain runs to 215 residues: MIATVILADSIKEAIEKIKSSSSDLYELRADSLKDYSKLELLEPYSEKLVVTIRSKDEGGFKELSDEKRLELYSKFLEIKPRYVDVEFRSKIKDEVMEIAKRVGSRVILSYHNFRETPPFGVLYNLLEDMESEGADIVKIVTHASSPKDNIRIIRLYEFADNLIAFCMGSKGKISRIFSSMYSPITYVALDKKAAPGQLTLEELRVILKILGEGR.

Residues 27-29 (ELR) and arginine 54 each bind 3-dehydroquinate. The active-site Proton donor/acceptor is the histidine 112. Lysine 139 acts as the Schiff-base intermediate with substrate in catalysis. Positions 176 and 198 each coordinate 3-dehydroquinate.

The protein belongs to the type-I 3-dehydroquinase family. Homodimer.

The catalysed reaction is 3-dehydroquinate = 3-dehydroshikimate + H2O. The protein operates within metabolic intermediate biosynthesis; chorismate biosynthesis; chorismate from D-erythrose 4-phosphate and phosphoenolpyruvate: step 3/7. Its function is as follows. Involved in the third step of the chorismate pathway, which leads to the biosynthesis of aromatic amino acids. Catalyzes the cis-dehydration of 3-dehydroquinate (DHQ) and introduces the first double bond of the aromatic ring to yield 3-dehydroshikimate. The protein is 3-dehydroquinate dehydratase of Pyrococcus abyssi (strain GE5 / Orsay).